The chain runs to 447 residues: Argininosuccinate synthase (447 aa).

Residues 17–25 (AFSGGLDTS) and alanine 43 each bind ATP. Tyrosine 99 is an L-citrulline binding site. ATP contacts are provided by glycine 129 and threonine 131. Residues threonine 131, asparagine 135, and aspartate 136 each contribute to the L-aspartate site. Position 135 (asparagine 135) interacts with L-citrulline. Aspartate 136 serves as a coordination point for ATP. L-citrulline is bound by residues arginine 139 and serine 192. Aspartate 194 lines the ATP pocket. Threonine 201, glutamate 203, and glutamate 280 together coordinate L-citrulline.

Belongs to the argininosuccinate synthase family. Type 2 subfamily. In terms of assembly, homotetramer.

It is found in the cytoplasm. It carries out the reaction L-citrulline + L-aspartate + ATP = 2-(N(omega)-L-arginino)succinate + AMP + diphosphate + H(+). The protein operates within amino-acid biosynthesis; L-arginine biosynthesis; L-arginine from L-ornithine and carbamoyl phosphate: step 2/3. The sequence is that of Argininosuccinate synthase from Janthinobacterium sp. (strain Marseille) (Minibacterium massiliensis).